Consider the following 380-residue polypeptide: Cytochrome b (380 aa).

4 consecutive transmembrane segments (helical) span residues 34–54 (FGSL…LLAM), 78–99 (WLIR…YFHI), 114–134 (WNTG…GYVL), and 179–199 (FFAL…IHLT). Heme b-binding residues include H84 and H98. H183 and H197 together coordinate heme b. H202 is a binding site for a ubiquinone. A run of 4 helical transmembrane segments spans residues 227–247 (LKDI…ALFS), 289–309 (LGGV…PFLH), 321–341 (ISQL…WVGS), and 348–368 (FIII…VLFP).

The protein belongs to the cytochrome b family. The cytochrome bc1 complex contains 11 subunits: 3 respiratory subunits (MT-CYB, CYC1 and UQCRFS1), 2 core proteins (UQCRC1 and UQCRC2) and 6 low-molecular weight proteins (UQCRH/QCR6, UQCRB/QCR7, UQCRQ/QCR8, UQCR10/QCR9, UQCR11/QCR10 and a cleavage product of UQCRFS1). This cytochrome bc1 complex then forms a dimer. It depends on heme b as a cofactor.

It is found in the mitochondrion inner membrane. Component of the ubiquinol-cytochrome c reductase complex (complex III or cytochrome b-c1 complex) that is part of the mitochondrial respiratory chain. The b-c1 complex mediates electron transfer from ubiquinol to cytochrome c. Contributes to the generation of a proton gradient across the mitochondrial membrane that is then used for ATP synthesis. In Pachyptila salvini (Salvin's prion), this protein is Cytochrome b (MT-CYB).